A 349-amino-acid chain; its full sequence is Selenide, water dikinase (349 aa).

Residue Sec-19 is part of the active site. Residue Sec-19 is a non-standard amino acid, selenocysteine. ATP is bound by residues Lys-22 and 50 to 52 (LGD). Asp-53 lines the Mg(2+) pocket. Residues Asp-69, Asp-92, and 140 to 142 (GHT) each bind ATP. Asp-92 is a binding site for Mg(2+). Residue Asp-246 participates in Mg(2+) binding.

Belongs to the selenophosphate synthase 1 family. Class I subfamily. In terms of assembly, homodimer. Mg(2+) is required as a cofactor.

It catalyses the reaction hydrogenselenide + ATP + H2O = selenophosphate + AMP + phosphate + 2 H(+). Its function is as follows. Synthesizes selenophosphate from selenide and ATP. The chain is Selenide, water dikinase from Methanocaldococcus jannaschii (strain ATCC 43067 / DSM 2661 / JAL-1 / JCM 10045 / NBRC 100440) (Methanococcus jannaschii).